The sequence spans 356 residues: DNA polymerase IV (356 aa).

Positions 6-187 constitute a UmuC domain; the sequence is IIHIDMDYFF…LDIGDFPGVG (182 aa). Residues aspartate 10 and aspartate 105 each coordinate Mg(2+). Residue glutamate 106 is part of the active site.

This sequence belongs to the DNA polymerase type-Y family. In terms of assembly, monomer. It depends on Mg(2+) as a cofactor.

Its subcellular location is the cytoplasm. It catalyses the reaction DNA(n) + a 2'-deoxyribonucleoside 5'-triphosphate = DNA(n+1) + diphosphate. Its function is as follows. Poorly processive, error-prone DNA polymerase involved in untargeted mutagenesis. Copies undamaged DNA at stalled replication forks, which arise in vivo from mismatched or misaligned primer ends. These misaligned primers can be extended by PolIV. Exhibits no 3'-5' exonuclease (proofreading) activity. May be involved in translesional synthesis, in conjunction with the beta clamp from PolIII. This is DNA polymerase IV from Staphylococcus aureus (strain COL).